Consider the following 200-residue polypeptide: MEYIYSIFIGYFFGAIPFSFFIAKLKGIDIRKTGSGNVGGTNVLRNAGAFYGALAFFFDIFKAYIAVFLVKGFGIKFMLIAGTMAVLGHCYSIFLKFKGGKGVASTFGVFLAVYPWSGLVFFGVWLFIVAVTKYVSLASMIGLIFASIFVFFAGKDFWVIFLALSLFSILRHKDNIQRLINGNERKTDVIGYFFGKGKKN.

Transmembrane regions (helical) follow at residues 3 to 23 (YIYS…FFIA), 50 to 70 (FYGA…VFLV), 75 to 95 (IKFM…SIFL), 109 to 129 (VFLA…LFIV), and 134 to 154 (YVSL…FFAG).

Belongs to the PlsY family. Probably interacts with PlsX.

It localises to the cell inner membrane. It catalyses the reaction an acyl phosphate + sn-glycerol 3-phosphate = a 1-acyl-sn-glycero-3-phosphate + phosphate. The protein operates within lipid metabolism; phospholipid metabolism. Catalyzes the transfer of an acyl group from acyl-phosphate (acyl-PO(4)) to glycerol-3-phosphate (G3P) to form lysophosphatidic acid (LPA). This enzyme utilizes acyl-phosphate as fatty acyl donor, but not acyl-CoA or acyl-ACP. This chain is Glycerol-3-phosphate acyltransferase, found in Thermosipho melanesiensis (strain DSM 12029 / CIP 104789 / BI429).